Consider the following 114-residue polypeptide: Cyclin-dependent kinase 2-associated protein 1 (114 aa).

The disordered stretch occupies residues 18–57 (AGSVHSPSTSMATSSQYRQLLSDYGPPSLGYTQGTGNSQV). The segment at 19-24 (GSVHSP) is interaction with CDK2AP2. Positions 20–36 (SVHSPSTSMATSSQYRQ) are enriched in polar residues. Position 45 is a phosphoserine; by IKKE (Ser45). The span at 47–57 (GYTQGTGNSQV) shows a compositional bias: polar residues.

Belongs to the CDK2AP family. In terms of assembly, homodimer. Component of the nucleosome remodeling and deacetylase (NuRD) repressor complex, composed of core proteins MTA1, MTA2, MTA3, RBBP4, RBBP7, HDAC1, HDAC2, MBD2, MBD3, and peripherally associated proteins CDK2AP1, CDK2AP2, GATAD2A, GATAD2B, CHD3, CHD4 and CHD5. The exact stoichiometry of the NuRD complex is unknown, and some subunits such as MBD2 and MBD3, GATAD2A and GATAD2B, and CHD3, CHD4 and CHD5 define mutually exclusive NuRD complexes. Interacts with monomeric unphosphorylated CDK2. Interacts with CDK2AP2. Interacts with GATAD2A. Interacts with HDAC1. Interacts with HDAC2. Interacts with MBD2. Interacts with MBD3. Interacts with RBBP4. Interacts with RBBP7. Post-translationally, phosphorylated in vitro by IKBKE at Ser-45.

It localises to the nucleus. It is found in the chromosome. In terms of biological role, inhibitor of cyclin-dependent kinase CDK2. Also acts as a component of the histone deacetylase NuRD complex which participates in the remodeling of chromatin. The protein is Cyclin-dependent kinase 2-associated protein 1 (Cdk2ap1) of Mus musculus (Mouse).